A 638-amino-acid polypeptide reads, in one-letter code: 1-deoxy-D-xylulose-5-phosphate synthase (638 aa).

Thiamine diphosphate is bound by residues histidine 74 and 115–117 (GHS). Aspartate 146 serves as a coordination point for Mg(2+). Thiamine diphosphate-binding positions include 147-148 (GA), asparagine 175, tyrosine 286, and glutamate 366. Asparagine 175 provides a ligand contact to Mg(2+).

It belongs to the transketolase family. DXPS subfamily. In terms of assembly, homodimer. Requires Mg(2+) as cofactor. It depends on thiamine diphosphate as a cofactor.

It catalyses the reaction D-glyceraldehyde 3-phosphate + pyruvate + H(+) = 1-deoxy-D-xylulose 5-phosphate + CO2. Its pathway is metabolic intermediate biosynthesis; 1-deoxy-D-xylulose 5-phosphate biosynthesis; 1-deoxy-D-xylulose 5-phosphate from D-glyceraldehyde 3-phosphate and pyruvate: step 1/1. In terms of biological role, catalyzes the acyloin condensation reaction between C atoms 2 and 3 of pyruvate and glyceraldehyde 3-phosphate to yield 1-deoxy-D-xylulose-5-phosphate (DXP). This chain is 1-deoxy-D-xylulose-5-phosphate synthase, found in Syntrophomonas wolfei subsp. wolfei (strain DSM 2245B / Goettingen).